The chain runs to 631 residues: Glutathione S-transferase C-terminal domain-containing protein (631 aa).

One can recognise a GST C-terminal domain in the interval 128–330 (LGFKKTCLKA…QEVPRVQTAA (203 aa)). Disordered regions lie at residues 188 to 233 (HNDD…SSSA) and 345 to 373 (TTSSQQPPNLDEAPSAEEQNDPSFIGGPR). Residues 211-224 (AKEKTKSKGHRQET) are compositionally biased toward basic and acidic residues. Phosphoserine is present on serine 231.

It belongs to the GSTCD family.

The protein localises to the cytoplasm. The sequence is that of Glutathione S-transferase C-terminal domain-containing protein (GSTCD) from Bos taurus (Bovine).